A 226-amino-acid chain; its full sequence is Glutathione peroxidase 3 (226 aa).

The signal sequence occupies residues methionine 1–glycine 24. Selenocysteine 73 is an active-site residue. A non-standard amino acid (selenocysteine) is located at residue selenocysteine 73.

Belongs to the glutathione peroxidase family. As to quaternary structure, homotetramer. Secreted in plasma.

The protein localises to the secreted. The catalysed reaction is 2 glutathione + H2O2 = glutathione disulfide + 2 H2O. It catalyses the reaction tert-butyl hydroperoxide + 2 glutathione = tert-butanol + glutathione disulfide + H2O. In terms of biological role, protects cells and enzymes from oxidative damage, by catalyzing the reduction of hydrogen peroxide, lipid peroxides and organic hydroperoxide, by glutathione. This Bos taurus (Bovine) protein is Glutathione peroxidase 3.